The chain runs to 297 residues: Nucleotide-binding protein CJA_2809 (297 aa).

Gly8–Thr15 is a binding site for ATP. Position 59–62 (Asp59–Asn62) interacts with GTP.

It belongs to the RapZ-like family.

Its function is as follows. Displays ATPase and GTPase activities. This Cellvibrio japonicus (strain Ueda107) (Pseudomonas fluorescens subsp. cellulosa) protein is Nucleotide-binding protein CJA_2809.